Reading from the N-terminus, the 305-residue chain is uncharacterized protein (305 aa).

The segment covering 1–10 (MLWAQRKKRK) has biased composition (basic residues). The segment at 1-30 (MLWAQRKKRKATTETTEDKPAESHRPNDSW) is disordered. Basic and acidic residues predominate over residues 16–27 (TEDKPAESHRPN). Serine 39 is subject to Phosphoserine. Polar residues predominate over residues 92–101 (QKISGTSVSK). Residues 92 to 114 (QKISGTSVSKEMQRESGKSPSME) form a disordered region. Serine 158 carries the post-translational modification Phosphoserine. Residues 197–208 (SHHGNQSHQNHN) are compositionally biased toward low complexity. A disordered region spans residues 197–305 (SHHGNQSHQN…VNRRNQIYDS (109 aa)). 2 stretches are compositionally biased toward polar residues: residues 209–221 (TYPC…SRSV) and 231–244 (LSHQ…SHQN). Residues 247–293 (GHPSQQGHSSHSNQQGHLGLSSQQGHPSQSSHQSHQGQPGHPNHQSH) show a composition bias toward low complexity. Polar residues predominate over residues 294–305 (SLVNRRNQIYDS).

This is an uncharacterized protein from Rattus norvegicus (Rat).